We begin with the raw amino-acid sequence, 297 residues long: Protein phosphatase PTC7 homolog (297 aa).

A mitochondrion-targeting transit peptide spans 1–27 (MFSVLSCGRLVARAVFGGLSQTDSRDY). The 265-residue stretch at 28-292 (SLVTASCGFG…DDITVLLSIV (265 aa)) folds into the PPM-type phosphatase domain. Asp-71, Gly-72, and Asp-216 together coordinate Mn(2+).

Belongs to the PP2C family. The cofactor is Mg(2+). Requires Mn(2+) as cofactor.

It is found in the mitochondrion matrix. The catalysed reaction is O-phospho-L-seryl-[protein] + H2O = L-seryl-[protein] + phosphate. It carries out the reaction O-phospho-L-threonyl-[protein] + H2O = L-threonyl-[protein] + phosphate. Its function is as follows. Protein phosphatase which positively regulates biosynthesis of the ubiquinone, coenzyme Q. Dephosphorylates the ubiquinone biosynthesis protein coq7 which is likely to lead to its activation. This is Protein phosphatase PTC7 homolog (pptc7) from Xenopus laevis (African clawed frog).